Consider the following 213-residue polypeptide: Glutathione S-transferase APIC (213 aa).

The 82-residue stretch at 1-82 (MAIKVHGSPM…YIAHVYADNG (82 aa)) folds into the GST N-terminal domain. Glutathione-binding positions include serine 11, 12 to 13 (TA), 40 to 41 (HK), 53 to 54 (QV), and 66 to 67 (ES). The GST C-terminal domain occupies 89 to 213 (DPKKMPIMSV…WVKGLEKLQK (125 aa)).

The protein belongs to the GST superfamily. Phi family.

It catalyses the reaction RX + glutathione = an S-substituted glutathione + a halide anion + H(+). In terms of biological role, conjugation of reduced glutathione to a wide number of exogenous and endogenous hydrophobic electrophiles. This chain is Glutathione S-transferase APIC, found in Nicotiana tabacum (Common tobacco).